Here is a 647-residue protein sequence, read N- to C-terminus: MTLFHHVVDRGAKKRGRNGEQRLFPLSSLLDGYECARRDEHISYGASAAAVPPFGCTFSSAHGQQNCLAVANEEGFVTIFNTGEKQSSVLKEWQAHDNAVFDIAWVPGTNCLVTASGDQTARLWDVITGDLLGTFKGHQCSLKSVAFYKQEKAVFSTGGRDGNIMIWDTRCSKKDGFYRQVKQISGAHMKPERFTPQTKKRRGMAPPVDSQQGVTVVLFCDETKLISSGAVDGIIKMWDLRRNYTAYHQNPLPLQAYPYPGSCTRKLGYSGLSLDYTGSRLFSNCTDDNIYMFNISGLKTTPVAVFSGHSNSSFYVKSTVSPDDQFLASGSSDHNVYIWKISDPKQAPMMLQGHSQEVTSVAWCPTDFTKIASCSDDNTVRIWRLNRKPEGENSTIQDGNLVGWTIRKVQSPNRTPGHHSPVELTPSKNPGSVRSVSLASPQPATCAPTGAALPLPSNTSSAPPAKLTSPKMPSSLQQWISRSSKSPVRKALTPVLQGLSFEHRVKRRLETGDSASSGLGEEIDGVSELYPNVKRSRSSVSTLKKEDSFGLESEKRLGSDGAEASGKENSSPRRTDWLSVISQKFKGSAQPKSPSSGSSQQDTRTLESPAAVSPRPMKVFSPPTNKKASPSKPMKKISSYFMKRTQD.

WD repeat units follow at residues 48 to 88, 95 to 134, 137 to 177, 209 to 248, 264 to 303, 308 to 349, and 353 to 393; these read AAAV…KQSS, AHDN…LLGT, GHQC…KDGF, DSQQ…TAYH, TRKL…TTPV, GHSN…QAPM, and GHSQ…EGEN. 2 consecutive short sequence motifs (DDB1-binding motif) follow at residues 167 to 170 and 238 to 241; these read WDTR and WDLR. Disordered stretches follow at residues 410–487 and 534–647; these read QSPN…SKSP and KRSR…RTQD. 2 stretches are compositionally biased toward polar residues: residues 426 to 443 and 471 to 486; these read PSKN…SPQP and KMPS…SSKS. Over residues 543–558 the composition is skewed to basic and acidic residues; that stretch reads LKKEDSFGLESEKRLG. Low complexity predominate over residues 586 to 600; sequence KGSAQPKSPSSGSSQ.

Belongs to the WD repeat cdt2 family. Component of the DCX(DTL) E3 ubiquitin ligase complex, at least composed of cul4 (cul4a or cul4b), ddb1, dtl/cdt2 and rbx1.

The protein localises to the nucleus. Its subcellular location is the cytoplasm. It localises to the cytoskeleton. The protein resides in the microtubule organizing center. It is found in the centrosome. The protein localises to the chromosome. It participates in protein modification; protein ubiquitination. Its function is as follows. Substrate-specific adapter of a DCX (DDB1-CUL4-X-box) E3 ubiquitin-protein ligase complex required for cell cycle control, DNA damage response and translesion DNA synthesis. The DCX(DTL) complex, also named CRL4(CDT2) complex, mediates the polyubiquitination and subsequent degradation of CDT1, CDKN1A/p21(CIP1), KMT5A and SDE2. CDT1 degradation in response to DNA damage is necessary to ensure proper cell cycle regulation of DNA replication. CDKN1A/p21(CIP1) degradation during S phase or following UV irradiation is essential to control replication licensing. KMT5A degradation is also important for a proper regulation of mechanisms such as TGF-beta signaling, cell cycle progression, DNA repair and cell migration. Most substrates require their interaction with PCNA for their polyubiquitination: substrates interact with PCNA via their PIP-box, and those containing the 'K+4' motif in the PIP box, recruit the DCX(DTL) complex, leading to their degradation. In undamaged proliferating cells, the DCX(DTL) complex also promotes the 'Lys-164' monoubiquitination of PCNA, thereby being involved in PCNA-dependent translesion DNA synthesis. May play a role in the regulation of the circadian clock. This is Denticleless protein homolog (dtl) from Danio rerio (Zebrafish).